The chain runs to 218 residues: Small ribosomal subunit protein uS3 (218 aa).

In terms of domain architecture, KH type-2 spans 38–106 (LRSDLKKKLM…PVHLNIEEVK (69 aa)).

It belongs to the universal ribosomal protein uS3 family. Part of the 30S ribosomal subunit. Forms a tight complex with proteins S10 and S14.

Its function is as follows. Binds the lower part of the 30S subunit head. Binds mRNA in the 70S ribosome, positioning it for translation. This is Small ribosomal subunit protein uS3 from Legionella pneumophila (strain Lens).